Consider the following 276-residue polypeptide: Elongation factor Ts (276 aa).

Residues 80-83 are involved in Mg(2+) ion dislocation from EF-Tu; sequence TDFV.

The protein belongs to the EF-Ts family.

It is found in the cytoplasm. Associates with the EF-Tu.GDP complex and induces the exchange of GDP to GTP. It remains bound to the aminoacyl-tRNA.EF-Tu.GTP complex up to the GTP hydrolysis stage on the ribosome. In Acidothermus cellulolyticus (strain ATCC 43068 / DSM 8971 / 11B), this protein is Elongation factor Ts.